A 365-amino-acid chain; its full sequence is Anhydro-N-acetylmuramic acid kinase (365 aa).

12 to 19 (GTSLDGID) is an ATP binding site.

Belongs to the anhydro-N-acetylmuramic acid kinase family.

The enzyme catalyses 1,6-anhydro-N-acetyl-beta-muramate + ATP + H2O = N-acetyl-D-muramate 6-phosphate + ADP + H(+). Its pathway is amino-sugar metabolism; 1,6-anhydro-N-acetylmuramate degradation. It functions in the pathway cell wall biogenesis; peptidoglycan recycling. Its function is as follows. Catalyzes the specific phosphorylation of 1,6-anhydro-N-acetylmuramic acid (anhMurNAc) with the simultaneous cleavage of the 1,6-anhydro ring, generating MurNAc-6-P. Is required for the utilization of anhMurNAc either imported from the medium or derived from its own cell wall murein, and thus plays a role in cell wall recycling. In Rhizorhabdus wittichii (strain DSM 6014 / CCUG 31198 / JCM 15750 / NBRC 105917 / EY 4224 / RW1) (Sphingomonas wittichii), this protein is Anhydro-N-acetylmuramic acid kinase.